The primary structure comprises 686 residues: Amphiphysin (686 aa).

Coiled-coil stretches lie at residues 10 to 83 and 144 to 191; these read AKNV…SLHE and DYDS…QEEL. A BAR domain is found at 24–240; the sequence is VLQKLGKADE…MTKLGDQHAD (217 aa). Disordered stretches follow at residues 244-314, 421-441, and 483-597; these read SIQG…PTKE, AETE…ATAA, and VEEA…AGAV. The residue at position 252 (serine 252) is a Phosphoserine. At threonine 260 the chain carries Phosphothreonine. Residues 261 to 274 show a composition bias toward pro residues; it reads PSPPEEPSPLPSPT. A phosphoserine mark is found at serine 262, serine 268, serine 272, and serine 276. Threonine 280 bears the Phosphothreonine mark. The segment covering 424 to 441 has biased composition (low complexity); sequence EQALPTEPQAEEPPATAA. Serine 500 is subject to Phosphoserine. A compositionally biased stretch (basic and acidic residues) spans 541–562; the sequence is SNHEGEGEHQETATGTEPREAA. The SH3 domain occupies 613–686; it reads GFLYKVETLH…FPENFTRRLE (74 aa). Serine 629 carries the phosphoserine modification.

Heterodimer with BIN1. Binds SH3GLB1. Interacts with REPS1 and SGIP1. Binds AP2A2. Interacts with AP2B1. Interacts with DNM1 and SYNJ1.

It localises to the cytoplasmic vesicle. Its subcellular location is the secretory vesicle. It is found in the synaptic vesicle membrane. The protein resides in the cytoplasm. The protein localises to the cytoskeleton. Functionally, may participate in mechanisms of regulated exocytosis in synapses and certain endocrine cell types. May control the properties of the membrane associated cytoskeleton. The sequence is that of Amphiphysin (Amph) from Mus musculus (Mouse).